The sequence spans 471 residues: Ribulose bisphosphate carboxylase large chain (471 aa).

Residues Asn-115 and Thr-165 each contribute to the substrate site. Catalysis depends on Lys-167, which acts as the Proton acceptor. Position 169 (Lys-169) interacts with substrate. Lys-193, Asp-195, and Glu-196 together coordinate Mg(2+). An N6-carboxylysine modification is found at Lys-193. The Proton acceptor role is filled by His-286. Residues Arg-287, His-319, and Ser-371 each contribute to the substrate site.

Belongs to the RuBisCO large chain family. Type I subfamily. As to quaternary structure, heterohexadecamer of 8 large chains and 8 small chains. It depends on Mg(2+) as a cofactor.

Its subcellular location is the carboxysome. It carries out the reaction 2 (2R)-3-phosphoglycerate + 2 H(+) = D-ribulose 1,5-bisphosphate + CO2 + H2O. The enzyme catalyses D-ribulose 1,5-bisphosphate + O2 = 2-phosphoglycolate + (2R)-3-phosphoglycerate + 2 H(+). Functionally, ruBisCO catalyzes two reactions: the carboxylation of D-ribulose 1,5-bisphosphate, the primary event in carbon dioxide fixation, as well as the oxidative fragmentation of the pentose substrate in the photorespiration process. Both reactions occur simultaneously and in competition at the same active site. The protein is Ribulose bisphosphate carboxylase large chain of Prochlorococcus marinus (strain MIT 9301).